The primary structure comprises 94 residues: DNA gyrase subunit A (94 aa).

Positions 35 to 94 (LPDVRDGLKPVHRRILYGLNEQGMTPDKPYKKSARIVGDVMGKYHPHGDSSIYEAMVRMA) constitute a Topo IIA-type catalytic domain.

The protein belongs to the type II topoisomerase GyrA/ParC subunit family. In terms of assembly, heterotetramer, composed of two GyrA and two GyrB chains. In the heterotetramer, GyrA contains the active site tyrosine that forms a transient covalent intermediate with DNA, while GyrB binds cofactors and catalyzes ATP hydrolysis.

The protein localises to the cytoplasm. The enzyme catalyses ATP-dependent breakage, passage and rejoining of double-stranded DNA.. A type II topoisomerase that negatively supercoils closed circular double-stranded (ds) DNA in an ATP-dependent manner to modulate DNA topology and maintain chromosomes in an underwound state. Negative supercoiling favors strand separation, and DNA replication, transcription, recombination and repair, all of which involve strand separation. Also able to catalyze the interconversion of other topological isomers of dsDNA rings, including catenanes and knotted rings. Type II topoisomerases break and join 2 DNA strands simultaneously in an ATP-dependent manner. The chain is DNA gyrase subunit A from Staphylococcus epidermidis.